The sequence spans 531 residues: Zinc finger CCCH-type with G patch domain-containing protein (531 aa).

The residue at position 1 (M1) is an N-acetylmethionine. Residues 91 to 133 are disordered; it reads EAPAAARGSGSETVPKAEAGPESAAGGQEEEEGEDEEELSGTK. Over residues 107–117 the composition is skewed to low complexity; it reads AEAGPESAAGG. Over residues 118 to 129 the composition is skewed to acidic residues; the sequence is QEEEEGEDEEEL. Residues 175-201 form a C3H1-type zinc finger; the sequence is KSLKPCPFFLEGKCRFKENCRFSHGQV. The interval 267 to 289 is disordered; that stretch reads PPLRTEATESDSDSDGTGDSSYA. Residues 333 to 379 form the G-patch domain; sequence TRGIGSRLLTKMGYEFGKGLGRHAEGRVEPIHAVVLPRGKSLDQCVE. S373 is subject to Phosphoserine. Disordered regions lie at residues 385–409, 426–446, and 509–531; these read TRVG…GGRP, APGA…DMYH, and RAQE…MTEF. A compositionally biased stretch (low complexity) spans 426–438; that stretch reads APGALEAGAAPAG. Over residues 518–531 the composition is skewed to basic and acidic residues; that stretch reads EQRKADTHKKMTEF.

As to quaternary structure, interacts with CHD4/Mi-2; the interaction is direct. Ubiquitinated in case of infection by HIV-1, leading to its degradation. Ubiquitination is mediated by the CUL4A-RBX1-DDB1-DCAF1/VPRBP complex that is hijacked by HIV-1 via interaction between HIV-1 Vpr and DCAF1/VPRBP. As to expression, widely expressed.

The protein localises to the nucleus. Its function is as follows. Transcription repressor that specifically binds the 5'-GGAG[GA]A[GA]A-3' consensus sequence. Represses transcription by recruiting the chromatin multiprotein complex NuRD to target promoters. Negatively regulates expression of EGFR, a gene involved in cell proliferation, survival and migration. Its ability to repress genes of the EGFR pathway suggest it may act as a tumor suppressor. Able to suppress breast carcinogenesis. Antagonizes the transcription repression by isoform 1 by competing for the binding of the NuRD complex. Does not bind DNA. This is Zinc finger CCCH-type with G patch domain-containing protein (ZGPAT) from Homo sapiens (Human).